The primary structure comprises 393 residues: NAD(P)H-quinone oxidoreductase subunit H, chloroplastic (393 aa).

It belongs to the complex I 49 kDa subunit family. As to quaternary structure, NDH is composed of at least 16 different subunits, 5 of which are encoded in the nucleus.

The protein resides in the plastid. It localises to the chloroplast thylakoid membrane. The enzyme catalyses a plastoquinone + NADH + (n+1) H(+)(in) = a plastoquinol + NAD(+) + n H(+)(out). It carries out the reaction a plastoquinone + NADPH + (n+1) H(+)(in) = a plastoquinol + NADP(+) + n H(+)(out). Its function is as follows. NDH shuttles electrons from NAD(P)H:plastoquinone, via FMN and iron-sulfur (Fe-S) centers, to quinones in the photosynthetic chain and possibly in a chloroplast respiratory chain. The immediate electron acceptor for the enzyme in this species is believed to be plastoquinone. Couples the redox reaction to proton translocation, and thus conserves the redox energy in a proton gradient. This Fagopyrum esculentum subsp. ancestrale (Wild buckwheat) protein is NAD(P)H-quinone oxidoreductase subunit H, chloroplastic.